The following is a 287-amino-acid chain: Inorganic pyrophosphatase (287 aa).

Arg-80 lines the diphosphate pocket. Asp-117, Asp-122, and Asp-154 together coordinate Mg(2+).

Belongs to the PPase family. Mg(2+) is required as a cofactor.

The protein localises to the cytoplasm. The catalysed reaction is diphosphate + H2O = 2 phosphate + H(+). This Yarrowia lipolytica (strain CLIB 122 / E 150) (Yeast) protein is Inorganic pyrophosphatase (IPP1).